Consider the following 103-residue polypeptide: NADH-quinone oxidoreductase subunit K (103 aa).

Transmembrane regions (helical) follow at residues 6-26 (IEYY…GFLL), 30-50 (LLVL…TLVA), and 66-86 (FFVI…VLAF).

The protein belongs to the complex I subunit 4L family. In terms of assembly, NDH-1 is composed of 14 different subunits. Subunits NuoA, H, J, K, L, M, N constitute the membrane sector of the complex.

Its subcellular location is the cell inner membrane. The enzyme catalyses a quinone + NADH + 5 H(+)(in) = a quinol + NAD(+) + 4 H(+)(out). Its function is as follows. NDH-1 shuttles electrons from NADH, via FMN and iron-sulfur (Fe-S) centers, to quinones in the respiratory chain. The immediate electron acceptor for the enzyme in this species is believed to be ubiquinone. Couples the redox reaction to proton translocation (for every two electrons transferred, four hydrogen ions are translocated across the cytoplasmic membrane), and thus conserves the redox energy in a proton gradient. This is NADH-quinone oxidoreductase subunit K from Sorangium cellulosum (strain So ce56) (Polyangium cellulosum (strain So ce56)).